The primary structure comprises 467 residues: Cysteine--tRNA ligase (467 aa).

Cys29 contributes to the Zn(2+) binding site. A 'HIGH' region motif is present at residues 31 to 41; sequence PTVYNYIHIGN. Cys209, His234, and Glu238 together coordinate Zn(2+). Residues 266–270 carry the 'KMSKS' region motif; sequence KMSKS. Residue Lys269 participates in ATP binding. A Phosphoserine modification is found at Ser270.

This sequence belongs to the class-I aminoacyl-tRNA synthetase family. Monomer. The cofactor is Zn(2+).

It is found in the cytoplasm. The enzyme catalyses tRNA(Cys) + L-cysteine + ATP = L-cysteinyl-tRNA(Cys) + AMP + diphosphate. This Bacillus licheniformis (strain ATCC 14580 / DSM 13 / JCM 2505 / CCUG 7422 / NBRC 12200 / NCIMB 9375 / NCTC 10341 / NRRL NRS-1264 / Gibson 46) protein is Cysteine--tRNA ligase.